Consider the following 468-residue polypeptide: uncharacterized protein (468 aa).

6 helical membrane passes run 59 to 79 (IPIV…ALFI), 135 to 155 (TWIN…LLLV), 215 to 235 (VFPF…LSIL), 297 to 317 (THCC…MVLV), 348 to 368 (HFIP…LVSY), and 385 to 405 (VFTV…IILF).

It is found in the membrane. This is an uncharacterized protein from Caenorhabditis elegans.